The sequence spans 347 residues: NADH-ubiquinone oxidoreductase chain 2 (347 aa).

9 helical membrane-spanning segments follow: residues 3–23, 59–79, 93–115, 150–170, 178–198, 200–220, 240–260, 274–294, and 326–346; these read PLAL…TMMS, YFMT…INLM, VASN…HFWV, NTNL…WGGL, ILAY…PFNP, LTLL…MILA, MTIM…LSGF, NSII…YFYT, and LPTL…ISML.

Belongs to the complex I subunit 2 family. As to quaternary structure, core subunit of respiratory chain NADH dehydrogenase (Complex I) which is composed of 45 different subunits. Interacts with TMEM242.

It localises to the mitochondrion inner membrane. The catalysed reaction is a ubiquinone + NADH + 5 H(+)(in) = a ubiquinol + NAD(+) + 4 H(+)(out). In terms of biological role, core subunit of the mitochondrial membrane respiratory chain NADH dehydrogenase (Complex I) which catalyzes electron transfer from NADH through the respiratory chain, using ubiquinone as an electron acceptor. Essential for the catalytic activity and assembly of complex I. The polypeptide is NADH-ubiquinone oxidoreductase chain 2 (Elephas maximus (Indian elephant)).